A 262-amino-acid chain; its full sequence is Thioredoxin-like protein HCF164, chloroplastic (262 aa).

Residues 1–54 constitute a chloroplast transit peptide; the sequence is MAVVASRCTGLLLPDLGASLAGFRRRRSTPASSLSFRPRRARRRLGSLSCIAPP. Residues 47–90 form a disordered region; the sequence is SLSCIAPPDSAEPQTDEPAAKDDSTEDKAEASSASQDAGNPTFP. Residues 64-76 are compositionally biased toward basic and acidic residues; that stretch reads PAAKDDSTEDKAE. A compositionally biased stretch (polar residues) spans 78–89; sequence SSASQDAGNPTF. The 153-residue stretch at 78–230 folds into the Thioredoxin domain; sequence SSASQDAGNP…FLDNVVALAS (153 aa). Active-site nucleophile residues include Cys-151 and Cys-154. Cys-151 and Cys-154 form a disulfide bridge.

It belongs to the thioredoxin family.

Its subcellular location is the plastid. It is found in the chloroplast. In terms of biological role, probable thiol-disulfide oxidoreductase that may participate in various redox reactions in the chloroplast. This is Thioredoxin-like protein HCF164, chloroplastic from Oryza sativa subsp. japonica (Rice).